A 77-amino-acid chain; its full sequence is uncharacterized protein (77 aa).

This is an uncharacterized protein from Xylella fastidiosa (strain 9a5c).